Consider the following 463-residue polypeptide: MAGLSRILLSCTLACLLAGQAAQASVDDPTRAGGDNRVRALRADQARRDVLLTACRDDPGHRRGEPDCVNAERAQALQQWQAAAMTSVDAAFSDLAGALRNAAPRRMEAAIVRLTRQLQPLVYSMMTLLVLLTGYALLARRDRPFEWHIRHALLVAVVTSLALSPDHYLSTVVAGVQDVAGWLSGPWTAPDGAAGRGGLAQLDQFAAQAQAWVAQLAGQAANDANPGSAVNWLLCAMIVATSAGGWLCLAASLLIVPGLIVTLLLSLGPLFLVLLLFPALQRWTNAWLGALVRALVFMALGTPAVGLLSDVLAGALPAGLPQRFATDPLRSTMLAATLCATATLMLLTLVPLASSVNAGLRRRLWPNAAHPGLAQAHRQAAARQYAPRPAAAAAAAGPHQAGTYAASATPAPAPARPAPSFPAHAYRQYALGGARRPPPRVRRDDRPAPAPDRRVLPRKPNLP.

The signal sequence occupies residues 1 to 24 (MAGLSRILLSCTLACLLAGQAAQA). Helical transmembrane passes span 118–138 (LQPL…YALL), 232–252 (WLLC…LAAS), 253–273 (LLIV…LFLV), 294–314 (ALVF…VLAG), and 333–353 (MLAA…VPLA). Over residues 376 to 410 (AHRQAAARQYAPRPAAAAAAAGPHQAGTYAASATP) the composition is skewed to low complexity. The segment at 376–463 (AHRQAAARQY…RVLPRKPNLP (88 aa)) is disordered. The segment covering 411–420 (APAPARPAPS) has biased composition (pro residues). Positions 441–455 (VRRDDRPAPAPDRRV) are enriched in basic and acidic residues.

The protein localises to the cell membrane. The polypeptide is Type IV secretion system protein PtlD homolog (ptlD) (Bordetella parapertussis (strain 12822 / ATCC BAA-587 / NCTC 13253)).